Here is a 229-residue protein sequence, read N- to C-terminus: MSFKREGDDWSQLNVLKKRRVGDLLASYIPEDEALMLRDGRFACAICPHRPVLDTLAMLTAHRAGKKHLSSLKLFYGKKQTGKGTEQNPRQQNELKTESKTEAPLLTQTRIITQNALHRAPHYNSCCRRKHRPEAPAPSVSSPPLPTAEVQLQSAEISKEPEPRERSDAKESAALLASAPMSPTKRRVLNHYLTLRSSGWVPDGRGRWIKDENVEFDSDEEEPPDLPLD.

Position 2 is a phosphoserine (S2). Positions 4–20 (KREGDDWSQLNVLKKRR) match the Bipartite nuclear localization signal motif. The Matrin-type zinc finger occupies 42 to 74 (FACAICPHRPVLDTLAMLTAHRAGKKHLSSLKL). Residue K67 forms a Glycyl lysine isopeptide (Lys-Gly) (interchain with G-Cter in SUMO2) linkage. 2 disordered regions span residues 80–105 (QTGKGTEQNPRQQNELKTESKTEAPL) and 128–187 (RRKH…TKRR). Over residues 82 to 92 (GKGTEQNPRQQ) the composition is skewed to polar residues. Positions 157–171 (ISKEPEPRERSDAKE) are enriched in basic and acidic residues. Phosphoserine is present on residues S182 and S218. The required for interaction with LUC7L2 stretch occupies residues 187 to 229 (RVLNHYLTLRSSGWVPDGRGRWIKDENVEFDSDEEEPPDLPLD).

In terms of assembly, component of the minor spliceosome. Within this complex, interacts with RNF113A, as well as with SF3B1/SF3b155, SF3B2/SF3b145, SF3B3/SF3b130 and CDC5L. May interact with LUC7L2 and SNRNP70.

It is found in the nucleus. The protein localises to the nucleoplasm. Its subcellular location is the nucleus speckle. Functionally, as a component of the minor spliceosome, involved in the splicing of U12-type introns in pre-mRNAs. Plays a role in the regulation of primary cilia length and Hedgehog signaling. This Mus musculus (Mouse) protein is Sodium channel modifier 1 (Scnm1).